A 163-amino-acid chain; its full sequence is Phosphopantetheine adenylyltransferase (163 aa).

Residue threonine 10 participates in substrate binding. Residues threonine 10–phenylalanine 11 and histidine 18 each bind ATP. Substrate-binding residues include lysine 42, leucine 74, and arginine 88. ATP-binding positions include glycine 89 to arginine 91, glutamate 99, and asparagine 124 to threonine 130.

It belongs to the bacterial CoaD family. Homohexamer. It depends on Mg(2+) as a cofactor.

The protein localises to the cytoplasm. It catalyses the reaction (R)-4'-phosphopantetheine + ATP + H(+) = 3'-dephospho-CoA + diphosphate. It functions in the pathway cofactor biosynthesis; coenzyme A biosynthesis; CoA from (R)-pantothenate: step 4/5. In terms of biological role, reversibly transfers an adenylyl group from ATP to 4'-phosphopantetheine, yielding dephospho-CoA (dPCoA) and pyrophosphate. The polypeptide is Phosphopantetheine adenylyltransferase (Shewanella baltica (strain OS155 / ATCC BAA-1091)).